The following is a 266-amino-acid chain: Undecaprenyl-diphosphatase 1 (266 aa).

Transmembrane regions (helical) follow at residues 1–21, 39–59, 87–107, 114–134, 149–169, 183–203, 218–238, and 246–266; these read MDTF…FLPI, QGLS…VIYF, WWII…KDFI, TGVI…ADKM, ALLI…RSGA, AAAR…AILV, ALTL…HYFL, and MTPF…FIFL.

It belongs to the UppP family.

The protein localises to the cell inner membrane. It carries out the reaction di-trans,octa-cis-undecaprenyl diphosphate + H2O = di-trans,octa-cis-undecaprenyl phosphate + phosphate + H(+). Its function is as follows. Catalyzes the dephosphorylation of undecaprenyl diphosphate (UPP). Confers resistance to bacitracin. The sequence is that of Undecaprenyl-diphosphatase 1 from Shewanella oneidensis (strain ATCC 700550 / JCM 31522 / CIP 106686 / LMG 19005 / NCIMB 14063 / MR-1).